Reading from the N-terminus, the 412-residue chain is Probable tRNA sulfurtransferase (412 aa).

Residues 58–163 (DEVIKQLGYV…SEGTYIYVGK (106 aa)) form the THUMP domain. Residues 181-182 (ML), 206-207 (HF), Arg265, Gly287, and Gln296 each bind ATP.

It belongs to the ThiI family.

The protein resides in the cytoplasm. It catalyses the reaction [ThiI sulfur-carrier protein]-S-sulfanyl-L-cysteine + a uridine in tRNA + 2 reduced [2Fe-2S]-[ferredoxin] + ATP + H(+) = [ThiI sulfur-carrier protein]-L-cysteine + a 4-thiouridine in tRNA + 2 oxidized [2Fe-2S]-[ferredoxin] + AMP + diphosphate. The catalysed reaction is [ThiS sulfur-carrier protein]-C-terminal Gly-Gly-AMP + S-sulfanyl-L-cysteinyl-[cysteine desulfurase] + AH2 = [ThiS sulfur-carrier protein]-C-terminal-Gly-aminoethanethioate + L-cysteinyl-[cysteine desulfurase] + A + AMP + 2 H(+). It participates in cofactor biosynthesis; thiamine diphosphate biosynthesis. In terms of biological role, catalyzes the ATP-dependent transfer of a sulfur to tRNA to produce 4-thiouridine in position 8 of tRNAs, which functions as a near-UV photosensor. Also catalyzes the transfer of sulfur to the sulfur carrier protein ThiS, forming ThiS-thiocarboxylate. This is a step in the synthesis of thiazole, in the thiamine biosynthesis pathway. The sulfur is donated as persulfide by IscS. In Acholeplasma laidlawii (strain PG-8A), this protein is Probable tRNA sulfurtransferase.